The following is a 417-amino-acid chain: Gamma-glutamyl phosphate reductase (417 aa).

This sequence belongs to the gamma-glutamyl phosphate reductase family.

It localises to the cytoplasm. The catalysed reaction is L-glutamate 5-semialdehyde + phosphate + NADP(+) = L-glutamyl 5-phosphate + NADPH + H(+). Its pathway is amino-acid biosynthesis; L-proline biosynthesis; L-glutamate 5-semialdehyde from L-glutamate: step 2/2. Catalyzes the NADPH-dependent reduction of L-glutamate 5-phosphate into L-glutamate 5-semialdehyde and phosphate. The product spontaneously undergoes cyclization to form 1-pyrroline-5-carboxylate. The polypeptide is Gamma-glutamyl phosphate reductase (Streptococcus agalactiae serotype III (strain NEM316)).